A 120-amino-acid polypeptide reads, in one-letter code: Small ribosomal subunit protein eS24 (120 aa).

Residues 101–120 form a disordered region; that stretch reads RDAGTKQKKGGSKGGQGAKG.

The protein belongs to the eukaryotic ribosomal protein eS24 family.

This is Small ribosomal subunit protein eS24 from Saccharolobus islandicus (strain Y.N.15.51 / Yellowstone #2) (Sulfolobus islandicus).